We begin with the raw amino-acid sequence, 101 residues long: uncharacterized protein (101 aa).

The first 19 residues, 1–19 (MKFKYLSTPLLFSALLFSA), serve as a signal peptide directing secretion. C20 is lipidated: N-palmitoyl cysteine. Residue C20 is the site of S-diacylglycerol cysteine attachment.

This sequence belongs to the MG439/MG440 family.

Its subcellular location is the cell membrane. This is an uncharacterized protein from Mycoplasma pneumoniae (strain ATCC 29342 / M129 / Subtype 1) (Mycoplasmoides pneumoniae).